The following is a 125-amino-acid chain: Large ribosomal subunit protein bL12 (125 aa).

It belongs to the bacterial ribosomal protein bL12 family. Homodimer. Part of the ribosomal stalk of the 50S ribosomal subunit. Forms a multimeric L10(L12)X complex, where L10 forms an elongated spine to which 2 to 4 L12 dimers bind in a sequential fashion. Binds GTP-bound translation factors.

Its function is as follows. Forms part of the ribosomal stalk which helps the ribosome interact with GTP-bound translation factors. Is thus essential for accurate translation. This is Large ribosomal subunit protein bL12 from Campylobacter curvus (strain 525.92).